Reading from the N-terminus, the 245-residue chain is 1-(5-phosphoribosyl)-5-[(5-phosphoribosylamino)methylideneamino] imidazole-4-carboxamide isomerase (245 aa).

D7 acts as the Proton acceptor in catalysis. The Proton donor role is filled by D129.

Belongs to the HisA/HisF family.

The protein resides in the cytoplasm. It carries out the reaction 1-(5-phospho-beta-D-ribosyl)-5-[(5-phospho-beta-D-ribosylamino)methylideneamino]imidazole-4-carboxamide = 5-[(5-phospho-1-deoxy-D-ribulos-1-ylimino)methylamino]-1-(5-phospho-beta-D-ribosyl)imidazole-4-carboxamide. It functions in the pathway amino-acid biosynthesis; L-histidine biosynthesis; L-histidine from 5-phospho-alpha-D-ribose 1-diphosphate: step 4/9. The polypeptide is 1-(5-phosphoribosyl)-5-[(5-phosphoribosylamino)methylideneamino] imidazole-4-carboxamide isomerase (Aliivibrio salmonicida (strain LFI1238) (Vibrio salmonicida (strain LFI1238))).